Here is a 317-residue protein sequence, read N- to C-terminus: uncharacterized protein (317 aa).

It belongs to the asfivirus F317L family.

Its subcellular location is the virion. This is an uncharacterized protein from African swine fever virus (strain Badajoz 1971 Vero-adapted) (Ba71V).